We begin with the raw amino-acid sequence, 419 residues long: Transcriptional regulator Myc-A (419 aa).

Positions 78–86 match the 9aaTAD motif; the sequence is EMVTEFLGG. Disordered regions lie at residues 141-166, 206-274, and 319-344; these read ALSS…HGSL, SPCQ…HYSP, and NNRK…NVLE. A compositionally biased stretch (acidic residues) spans 226 to 245; the sequence is ESEEEPEDEDEDCDEEEEID. The span at 248-261 shows a compositional bias: basic and acidic residues; that stretch reads TVEKRQSASKRVES. The span at 319-328 shows a compositional bias: polar residues; sequence NNRKCASPRS. In terms of domain architecture, bHLH spans 335–387; it reads DKRKTHNVLERQRRNELKLSFFALRDQVPEVASNEKAPKVVILKKATEYAISL. Residues 387–415 are leucine-zipper; it reads LQEDERRLIRETEQLKYRKEQLKQRLQQL.

In terms of assembly, efficient DNA binding requires dimerization with another bHLH protein. Binds DNA as a heterodimer with MAX.

It localises to the nucleus. Transcription factor that binds DNA in a non-specific manner, yet also specifically recognizes the core sequence 5'-CAC[GA]TG-3'. Activates the transcription of growth-related genes. In Xenopus laevis (African clawed frog), this protein is Transcriptional regulator Myc-A (myc-a).